Consider the following 152-residue polypeptide: Large ribosomal subunit protein uL13 (152 aa).

This sequence belongs to the universal ribosomal protein uL13 family. As to quaternary structure, part of the 50S ribosomal subunit.

Functionally, this protein is one of the early assembly proteins of the 50S ribosomal subunit, although it is not seen to bind rRNA by itself. It is important during the early stages of 50S assembly. The protein is Large ribosomal subunit protein uL13 of Wolbachia pipientis wMel.